Reading from the N-terminus, the 85-residue chain is COMM domain-containing protein 6 (85 aa).

Residue Met1 is modified to N-acetylmethionine. Positions 18–85 (QLVDFQWKLG…KEIAAVIETV (68 aa)) constitute a COMM domain.

Belongs to the COMM domain-containing protein 6 family. Component of the commander complex consisting of the CCC subcomplex and the retriever subcomplex. Component of the CCC (COMMD/CCDC22/CCDC93) subcomplex consisting of COMMD1, COMMD2, COMMD3, COMMD4, COMMD5, COMMD6, COMMD7, COMMD8, COMMD9, COMMD10, CCDC22 and CCDC93; within the complex forms a heterodimer with COMMD1. May form a homodimer with isoform 1. Interacts with RELA, RELB, NFKB1/p105. Does not interact with NFKBIB. Interacts with CCDC22, CCDC93, SCNN1B, CUL4A. Ubiquitous. Expressed in brain, heart, skeletal muscle, lung, pancreas, liver, kidney, small intestine and placenta.

It is found in the nucleus. The protein resides in the cytoplasm. Its function is as follows. Scaffold protein in the commander complex that is essential for endosomal recycling of transmembrane cargos; the commander complex is composed of the CCC subcomplex and the retriever subcomplex. May modulate activity of cullin-RING E3 ubiquitin ligase (CRL) complexes. Down-regulates activation of NF-kappa-B. Inhibits TNF-induced NFKB1 activation. The chain is COMM domain-containing protein 6 (COMMD6) from Homo sapiens (Human).